Consider the following 901-residue polypeptide: HTH-type transcriptional regulator MalT (901 aa).

39–46 (SPAGYGKT) serves as a coordination point for ATP. The HTH luxR-type domain occupies 829 to 894 (ELIRTSPLTQ…DAVQHAQQLL (66 aa)). The H-T-H motif DNA-binding region spans 853-872 (NEQIAGELAVAATTIKTHIR).

Belongs to the MalT family. In terms of assembly, monomer in solution. Oligomerizes to an active state in the presence of the positive effectors ATP and maltotriose.

With respect to regulation, activated by ATP and maltotriose, which are both required for DNA binding. Positively regulates the transcription of the maltose regulon whose gene products are responsible for uptake and catabolism of malto-oligosaccharides. Specifically binds to the promoter region of its target genes, recognizing a short DNA motif called the MalT box. The polypeptide is HTH-type transcriptional regulator MalT (Salmonella gallinarum (strain 287/91 / NCTC 13346)).